Consider the following 310-residue polypeptide: MKTLIRKFSRTAITVVLVILAFIAIFNAWVYYTESPWTRDARFSADVVAIAPDVSGLITQVNVHDNQLVKKGQILFTIDQPRYQKALEEAQADVAYYQVLAQEKRQEAGRRNRLGVQAMSREEIDQANNVLQTVLHQLAKAQATRDLAKLDLERTVIRAPADGWVTNLNVYTGEFITRGSTAVALVKQNSFYVLAYMEETKLEGVRPGYRAEITPLGSNKVLKGTVDSVAAGVTNASSTRDDKGMATIDSNLEWVRLAQRVPVRICLDNQQENIWPAGTTATVVVTGKQDRDESQDSFFRKMAHRLREFG.

A helical transmembrane segment spans residues 12–32; sequence AITVVLVILAFIAIFNAWVYY.

Belongs to the membrane fusion protein (MFP) (TC 8.A.1) family.

It is found in the cell inner membrane. Its function is as follows. Forms an efflux pump with AaeB. In Escherichia coli O8 (strain IAI1), this protein is p-hydroxybenzoic acid efflux pump subunit AaeA.